The chain runs to 283 residues: Thymidylate synthase (283 aa).

Arg-33 is a binding site for dUMP. His-63 is a (6R)-5,10-methylene-5,6,7,8-tetrahydrofolate binding site. A dUMP-binding site is contributed by 138 to 139 (RR). Cys-158 serves as the catalytic Nucleophile. Residues 185 to 188 (RSAD), Asn-196, and 226 to 228 (HIY) each bind dUMP. Residue Asp-188 coordinates (6R)-5,10-methylene-5,6,7,8-tetrahydrofolate. Position 282 (Ala-282) interacts with (6R)-5,10-methylene-5,6,7,8-tetrahydrofolate.

This sequence belongs to the thymidylate synthase family. Bacterial-type ThyA subfamily. Homodimer.

The protein localises to the cytoplasm. It carries out the reaction dUMP + (6R)-5,10-methylene-5,6,7,8-tetrahydrofolate = 7,8-dihydrofolate + dTMP. Its pathway is pyrimidine metabolism; dTTP biosynthesis. Functionally, catalyzes the reductive methylation of 2'-deoxyuridine-5'-monophosphate (dUMP) to 2'-deoxythymidine-5'-monophosphate (dTMP) while utilizing 5,10-methylenetetrahydrofolate (mTHF) as the methyl donor and reductant in the reaction, yielding dihydrofolate (DHF) as a by-product. This enzymatic reaction provides an intracellular de novo source of dTMP, an essential precursor for DNA biosynthesis. In Methylibium petroleiphilum (strain ATCC BAA-1232 / LMG 22953 / PM1), this protein is Thymidylate synthase.